Here is a 294-residue protein sequence, read N- to C-terminus: 4-diphosphocytidyl-2-C-methyl-D-erythritol kinase (294 aa).

Lysine 15 is an active-site residue. 101-111 (PSEAGLGGGSS) contributes to the ATP binding site. The active site involves aspartate 143.

It belongs to the GHMP kinase family. IspE subfamily.

The enzyme catalyses 4-CDP-2-C-methyl-D-erythritol + ATP = 4-CDP-2-C-methyl-D-erythritol 2-phosphate + ADP + H(+). The protein operates within isoprenoid biosynthesis; isopentenyl diphosphate biosynthesis via DXP pathway; isopentenyl diphosphate from 1-deoxy-D-xylulose 5-phosphate: step 3/6. In terms of biological role, catalyzes the phosphorylation of the position 2 hydroxy group of 4-diphosphocytidyl-2C-methyl-D-erythritol. The polypeptide is 4-diphosphocytidyl-2-C-methyl-D-erythritol kinase (Fusobacterium nucleatum subsp. nucleatum (strain ATCC 25586 / DSM 15643 / BCRC 10681 / CIP 101130 / JCM 8532 / KCTC 2640 / LMG 13131 / VPI 4355)).